We begin with the raw amino-acid sequence, 201 residues long: Protein lin-7 homolog B (201 aa).

The Kinase interacting site signature appears at 1-13 (MAALVEPLGLERE). One can recognise an L27 domain in the interval 10–65 (LEREVSRAVELLERLQRSGELPPQKLQALQRVLQSRFCSAIREVYEQLYDTLDITG). One can recognise a PDZ domain in the interval 93–175 (VVELPKTDEG…SVKLVVRYTP (83 aa)).

This sequence belongs to the lin-7 family. Forms a complex with CASK and CASKIN1. Component of the brain-specific heterotrimeric complex (LIN-10-LIN-2-LIN-7 complex) composed of at least APBA1, CASK, and LIN7, which associates with the motor protein KIF17 to transport vesicles along microtubules. Forms a heterotrimeric complex composed of MMP5, LIN7B and PATJ; the N-terminal L27 domain of PALS1 interacts with the L27 domain of PATJ and the C-terminal L27 domain of PALS1 interacts with the L27 domain of LIN7B. Forms a heterotrimeric complex with DLG1 and CASK via their L27 domains. Interacts with DLG4 and GRIN2B as well as CDH1 and CTNNB1, the channels KCNJ12/Kir2.2, KCNJ4/Kir2.3 and probably KCNJ2/Kir2.1 and SLC6A12/BGT-1 via its PDZ domain. The association of LIN7A with cadherin and beta-catenin is calcium-dependent, occurs at synaptic junctions and requires the actin cytoskeleton. Interacts with EGFR, ERBB2, ERBB3 and ERBB4 with both PDZ and KID domains. Interacts with ASIC3. Interacts with TOPK. Interacts with RTKN. Associates with KIF17 via APBA1. Interacts with APBA1. Interacts with MPP7. Interacts with DLG2. Interacts with DLG3.

It localises to the cell membrane. Its subcellular location is the basolateral cell membrane. The protein localises to the cell junction. The protein resides in the postsynaptic density membrane. It is found in the tight junction. Functionally, plays a role in establishing and maintaining the asymmetric distribution of channels and receptors at the plasma membrane of polarized cells. Forms membrane-associated multiprotein complexes that may regulate delivery and recycling of proteins to the correct membrane domains. The tripartite complex composed of LIN7 (LIN7A, LIN7B or LIN7C), CASK and APBA1 associates with the motor protein KIF17 to transport vesicles containing N-methyl-D-aspartate (NMDA) receptor subunit NR2B along microtubules. This complex may have the potential to couple synaptic vesicle exocytosis to cell adhesion in brain. Ensures the proper localization of GRIN2B (subunit 2B of the NMDA receptor) to neuronal postsynaptic density and may function in localizing synaptic vesicles at synapses where it is recruited by beta-catenin and cadherin. Required to localize Kir2 channels, GABA transporter (SLC6A12) and EGFR/ERBB1, ERBB2, ERBB3 and ERBB4 to the basolateral membrane of epithelial cells. May increase the amplitude of ASIC3 acid-evoked currents by stabilizing the channel at the cell surface. This Bos taurus (Bovine) protein is Protein lin-7 homolog B (LIN7B).